Reading from the N-terminus, the 327-residue chain is Methionyl-tRNA formyltransferase (327 aa).

Residue 121–124 (SLLP) participates in (6S)-5,6,7,8-tetrahydrofolate binding.

The protein belongs to the Fmt family.

It catalyses the reaction L-methionyl-tRNA(fMet) + (6R)-10-formyltetrahydrofolate = N-formyl-L-methionyl-tRNA(fMet) + (6S)-5,6,7,8-tetrahydrofolate + H(+). In terms of biological role, attaches a formyl group to the free amino group of methionyl-tRNA(fMet). The formyl group appears to play a dual role in the initiator identity of N-formylmethionyl-tRNA by promoting its recognition by IF2 and preventing the misappropriation of this tRNA by the elongation apparatus. In Burkholderia ambifaria (strain ATCC BAA-244 / DSM 16087 / CCUG 44356 / LMG 19182 / AMMD) (Burkholderia cepacia (strain AMMD)), this protein is Methionyl-tRNA formyltransferase.